The following is a 122-amino-acid chain: Secreted RxLR effector protein 80 (122 aa).

Residues 1–21 (MKKRALPIVIFVISLQQSSQS) form the signal peptide. The RxLR signature appears at 72 to 75 (RSLR).

It belongs to the RxLR effector family.

The protein resides in the secreted. It is found in the host endoplasmic reticulum membrane. In terms of biological role, secreted effector that dos not suppress the host cell death induced by cell death-inducing proteins. In Plasmopara viticola (Downy mildew of grapevine), this protein is Secreted RxLR effector protein 80.